Consider the following 78-residue polypeptide: Glycophorin-E (78 aa).

A signal peptide spans 1-19 (MYGKIIFVLLLSGIVSISA). The Extracellular portion of the chain corresponds to 20 to 52 (SSTTGVAMHTSTSSSVTKSYISSQTNGITLINW). The chain crosses the membrane as a helical span at residues 53 to 73 (WAMARVIFEVMLVVVGMIILI). Residues 74–78 (SYCIR) lie on the Cytoplasmic side of the membrane.

It belongs to the glycophorin-A family. The N-terminal extracellular domain is heavily glycosylated on serine and threonine residues. As to expression, erythrocytes.

Its subcellular location is the membrane. Functionally, this protein is a minor sialoglycoprotein in human erythrocyte membranes. The polypeptide is Glycophorin-E (GYPE) (Homo sapiens (Human)).